We begin with the raw amino-acid sequence, 215 residues long: UPF0056 membrane protein bbp_248 (215 aa).

A run of 6 helical transmembrane segments spans residues 10–32 (IYISFFFSLFALVNPIGMIPIFT), 52–74 (FSVAIILSISLIFGSFILNLFGI), 78–100 (SFRISGGILVMIIAISMINGNFI), 119–141 (ISIVPLAMPLIAGPGAISSTIVW), 151–169 (IFGCMVTIMLFSCFCWTLF), and 190–207 (IMGLLLMSLGIEFILAGL).

The protein belongs to the UPF0056 (MarC) family.

Its subcellular location is the cell membrane. This Buchnera aphidicola subsp. Baizongia pistaciae (strain Bp) protein is UPF0056 membrane protein bbp_248.